A 3419-amino-acid polypeptide reads, in one-letter code: Utrophin (3419 aa).

The segment at 1–246 (MAKYGHLEAS…LPDKKSIIMY (246 aa)) is actin-binding. Tyr-4 is subject to Phosphotyrosine. A Phosphoserine modification is found at Ser-10. Calponin-homology (CH) domains are found at residues 31 to 135 (DVQK…LHWQ) and 150 to 255 (TNSE…EVLP). The segment at 268–905 (TLPRKYKKEC…YQQQLENELK (638 aa)) is interaction with SYNM. Ser-295 is modified (phosphoserine). Spectrin repeat units lie at residues 312–416 (DSYQ…SRLH), 421–525 (ELQK…NRLQ), 532–636 (QELL…NQVT), 690–795 (KKFD…RKIQ), 801–901 (NAYF…QQLE), 910–1012 (PAYL…RSLE), 1019–1121 (RDFK…SRLS), 1128–1229 (MNLK…HTLE), 1236–1333 (VELL…ISLE), 1335–1436 (QLQV…LFQK), 1438–1540 (ANFE…QDLE), 1547–1648 (RKLK…NTLL), 1653–1747 (QLEV…INSA), 1748–1840 (QMLI…KIKA), 1841–1958 (IPQR…SDRR), 1969–2070 (KQFH…PRLK), and 2077–2176 (SGYR…KTRT). Positions 1336–1761 (LQVLRETDHM…GQDPAGTVEA (426 aa)) are interaction with SYNM. Position 1998 is a phosphoserine (Ser-1998). Ser-2201 carries the post-translational modification Phosphoserine. Spectrin repeat units follow at residues 2216-2319 (ADLD…QQLE), 2336-2426 (EELM…SALE), 2433-2542 (QTSR…AHLE), 2549-2674 (NRLL…KQVG), and 2681-2783 (RDLQ…KQLQ). The disordered stretch occupies residues 2616 to 2640 (DQPIEAPEEPRRNPQSKTELTPEER). The tract at residues 2785–3152 (AHRDFGPSSQ…TVLEGDNLET (368 aa)) is interaction with SYNM. The WW domain occupies 2799–2832 (TSVQLPWQRSISHNKVPYYINHQTQTTCWDHPKM). A ZZ-type; degenerate zinc finger spans residues 3052–3108 (KHQAKCNICKECPIVGFRYRSLKHFNYDVCQSCFFSGRTAKGHKLHYPMVEYCIPTT). 4 residues coordinate Zn(2+): Cys-3057, Cys-3060, Cys-3081, and Cys-3084. Disordered regions lie at residues 3277 to 3296 (RRGL…YHTS) and 3344 to 3395 (DSDS…TDLT). The residue at position 3284 (Ser-3284) is a Phosphoserine.

As to quaternary structure, homodimer. Interacts with the syntrophins SNTA1; SNTB1 and SNTB2. Interacts with SYNM. Interacts (via its WWW and ZZ domains) with DAG1 (via the PPXY motif of betaDAG1); the interaction is inhibited by the tyrosine phosphorylation of the PPXY motif of DAG1. Interacts with DTNB. Interacts with PGM5.

It is found in the postsynaptic cell membrane. The protein localises to the cytoplasm. Its subcellular location is the cytoskeleton. Its function is as follows. May play a role in anchoring the cytoskeleton to the plasma membrane. The chain is Utrophin from Rattus norvegicus (Rat).